Consider the following 862-residue polypeptide: Axin-1 (862 aa).

Residues 1–78 (MNIQEQGFPL…GYEPEGSASP (78 aa)) form a disordered region. The Tankyrase-binding motif motif lies at 20–29 (APRPPVPGEE). 2 positions are modified to phosphoserine; by CK1: S75 and S77. Residues 88 to 211 (SLHSLLDDQD…LKSDIYLEYT (124 aa)) enclose the RGS domain. The tract at residues 209–338 (EYTRTGSESP…DADTLSLTDS (130 aa)) is interaction with TP53. Disordered stretches follow at residues 215–289 (SESP…YSEG) and 316–344 (TSAN…DGIP). Position 217 is a phosphoserine; by CK1 (S217). Positions 242–258 (NEDEEWKCDQDMDEDDG) are enriched in acidic residues. Residues 325-339 (SLSSDADTLSLTDSS) show a composition bias toward low complexity. The interval 348 to 433 (IRKQHRREMQ…DGDPSSGPPG (86 aa)) is interaction with GSK3B. The tract at residues 353-411 (RREMQESVQVNGRVPLPHIPRTYRVPKEVRVEPQKFAEELIHRLEAVQRTREAEEKLEE) is interaction with SIAH1 and SIAH2. Positions 413–441 (LKRVRMEEEGEDGDPSSGPPGPCHKLPPA) are disordered. Over residues 429 to 441 (SGPPGPCHKLPPA) the composition is skewed to pro residues. An interaction with CTNNB1 region spans residues 434-502 (PCHKLPPAPA…SPDSGHVAKM (69 aa)). At S469 the chain carries Phosphoserine; by CK1. Residues 480–500 (RTPGRQSPGPGHRSPDSGHVA) form a disordered region. T481 bears the Phosphothreonine; by GSK3-beta mark. Phosphoserine occurs at positions 486, 493, and 511. The interaction with RNF111 stretch occupies residues 507–757 (GGAASGHGKH…PVLHVVPAVS (251 aa)). Positions 531 to 544 (HHRHVHHHVHHSTA) are enriched in basic residues. Disordered regions lie at residues 531 to 629 (HHRH…AEKN) and 641 to 679 (KEIS…GPQL). Basic and acidic residues predominate over residues 545–556 (RPKEQVEAEATR). The interaction with PPP2CA stretch occupies residues 575–789 (SRGYSESVGA…CDSIVVAYYF (215 aa)). S581 carries the phosphoserine modification. The interval 677–752 (PQLRTSVQPS…RPACAPVLHV (76 aa)) is interaction with HIPK2. The region spanning 780–862 (CDSIVVAYYF…KIIGKVEKVD (83 aa)) is the DIX domain. Glycyl lysine isopeptide (Lys-Gly) (interchain with G-Cter in SUMO) cross-links involve residues K857 and K860.

As to quaternary structure, homodimer. Interacts with ZBED3; the interaction is direct, enhanced by protein kinase GSK3B and casein kinase CSNK1E activities and decreases GSK3B-induced beta-catenin serine and threonine phosphorylations. Component of the beta-catenin destruction complex, containing at least, CTNNB1, an axin and GSK3B, that regulates CTNNB1 protein levels through phosphorylation and ubiquitination. Interacts with CTNNB1 (via the armadillo repeats 2-7). Interacts with GSK3B; the interaction hyperphosphorylates CTNNB1 leading to its ubiquitination and destruction. Component of the AXIN1-HIPK2-TP53 complex. Interacts directly in the complex with TP53 and HIPK2. Interacts with DAXX; the interaction stimulates the interaction of DAXX with TP53, stimulates 'Ser-46' phosphorylation of TP53 and induces cell death on UV irradiation. Also binds APC, SMAD6, SMAD7 and RNF111. Interacts with DIXDC1; prevents interaction with MAP3K1. Interacts with MAP3K4. Interacts with ANKRD6 and AIDA. Interacts with MDFI; the interaction decreases AXIN1-mediated JUN N-terminal kinase (JNK) activation. Interacts with MDFIC; the interaction inhibits beta-cateninin-mediated signaling and AXIN1-mediated JUN N-terminal kinase (JNK) activation. Interacts with LRP5 (via its phosphorylated PPPSP motifs); the interaction is stimulated by WNT1 and GSK3B and activates beta-catenin signaling. Interacts (via the C-terminal) with PPP1CA; the interaction dephosphorylates AXIN1 and regulates interaction with GSK3B. Interacts with PPP2CA; the interaction dephosphorylates AXIN1. Interacts with MACF1. Found in a complex composed of MACF1, APC, AXIN1, CTNNB1 and GSK3B. Interacts with TNKS. Interacts with DAB2; the interaction is mutually exclusive with the AXIN1:PPP1CA interaction. Interacts with WDR26. Interacts with GID8. Interacts with SIAH1 and SIAH2; both probably catalyze AXIN1 ubiquitination and subsequent proteasome-mediated ubiquitin-dependent degradation. Interaction with GSK3B and AXIN1 is competitive. Post-translationally, phosphorylation and dephosphorylation of AXIN1 regulates assembly and function of the beta-catenin complex. Phosphorylated by CK1 and GSK3B. Dephosphorylated by PPP1CA and PPP2CA. Phosphorylation by CK1 enhances binding of GSK3B to AXIN1. In terms of processing, ADP-ribosylated by tankyrase TNKS and TNKS2. Poly-ADP-ribosylated protein is recognized by RNF146, followed by ubiquitination at 'Lys-48' and subsequent activation of the Wnt signaling pathway. Ubiquitinated by RNF146 when poly-ADP-ribosylated, leading to its degradation and subsequent activation of the Wnt signaling pathway. Sumoylation at Lys-857 and Lys-860 prevents ubiquitination and degradation. Sumoylation is required for AXIN1-mediated JNK activation. Deubiquitinated by USP34, deubiquitinated downstream of beta-catenin stabilization step: deubiquitination is important for nuclear accumulation during Wnt signaling to positively regulate beta-catenin (CTNBB1)-mediated transcription. Ubiquitination by SIAH1 and SIAH2 induces its proteasomal degradation as part of the activation of the Wnt signaling pathway. Ubiquitously expressed.

The protein localises to the cytoplasm. Its subcellular location is the nucleus. It is found in the membrane. The protein resides in the cell membrane. Component of the beta-catenin destruction complex required for regulating CTNNB1 levels through phosphorylation and ubiquitination, and modulating Wnt-signaling. Controls dorsoventral patterning via two opposing effects; down-regulates CTNNB1 to inhibit the Wnt signaling pathway and ventralize embryos, but also dorsalizes embryos by activating a Wnt-independent JNK signaling pathway. In Wnt signaling, probably facilitates the phosphorylation of CTNNB1 and APC by GSK3B. Likely to function as a tumor suppressor. Enhances TGF-beta signaling by recruiting the RNF111 E3 ubiquitin ligase and promoting the degradation of inhibitory SMAD7. Also a component of the AXIN1-HIPK2-TP53 complex which controls cell growth, apoptosis and development. Facilitates the phosphorylation of TP53 by HIPK2 upon ultraviolet irradiation. The chain is Axin-1 (AXIN1) from Homo sapiens (Human).